Reading from the N-terminus, the 150-residue chain is Large ribosomal subunit protein eL19 (150 aa).

The interval 56–89 (KGQSRARARAFQEARKKGRHRGPGSKKGKKTARM) is disordered. The segment covering 71 to 89 (KKGRHRGPGSKKGKKTARM) has biased composition (basic residues).

This sequence belongs to the eukaryotic ribosomal protein eL19 family. In terms of assembly, part of the 50S ribosomal subunit.

Its function is as follows. Binds to the 23S rRNA. The sequence is that of Large ribosomal subunit protein eL19 from Thermococcus kodakarensis (strain ATCC BAA-918 / JCM 12380 / KOD1) (Pyrococcus kodakaraensis (strain KOD1)).